Consider the following 110-residue polypeptide: UPF0122 protein SP70585_1353 (110 aa).

The protein belongs to the UPF0122 family.

Functionally, might take part in the signal recognition particle (SRP) pathway. This is inferred from the conservation of its genetic proximity to ftsY/ffh. May be a regulatory protein. This chain is UPF0122 protein SP70585_1353, found in Streptococcus pneumoniae (strain 70585).